The primary structure comprises 272 residues: D-aminoacyl-tRNA deacylase (272 aa).

The protein belongs to the DtdA deacylase family. As to quaternary structure, monomer. Zn(2+) serves as cofactor.

The enzyme catalyses a D-aminoacyl-tRNA + H2O = a tRNA + a D-alpha-amino acid + H(+). It carries out the reaction glycyl-tRNA(Ala) + H2O = tRNA(Ala) + glycine + H(+). Its function is as follows. D-aminoacyl-tRNA deacylase with broad substrate specificity. By recycling D-aminoacyl-tRNA to D-amino acids and free tRNA molecules, this enzyme counteracts the toxicity associated with the formation of D-aminoacyl-tRNA entities in vivo. This Thermococcus onnurineus (strain NA1) protein is D-aminoacyl-tRNA deacylase.